Reading from the N-terminus, the 324-residue chain is Mitochondrial oxaloacetate transport protein (324 aa).

Solcar repeat units lie at residues 20-111 (ISKF…IRSS), 126-218 (QSVG…AKNI), and 227-312 (DGPA…TMKL). Helical transmembrane passes span 26 to 46 (FVAGGLAACIAVTVTNPIELI), 79 to 99 (GIKGLQKGLNAAYIYQIGLNG), 132 to 152 (VFSGAASGIIGAVIGSPLFLV), 193 to 213 (GIDAAILRTGAGSSVQLPIYN), 233 to 253 (LTASTISGLGVAVVMNPWDVI), and 284 to 305 (LYKGFAAQVFRIAPHTIMCLTF).

Belongs to the mitochondrial carrier (TC 2.A.29) family.

The protein resides in the mitochondrion inner membrane. The enzyme catalyses a dicarboxylate(in) + sulfate(out) = a dicarboxylate(out) + sulfate(in). It catalyses the reaction (2S)-2-isopropylmalate(in) + sulfate(out) = (2S)-2-isopropylmalate(out) + sulfate(in). It carries out the reaction (2R,3S)-3-isopropylmalate(in) + sulfate(out) = (2R,3S)-3-isopropylmalate(out) + sulfate(in). The catalysed reaction is malonate(in) + sulfate(out) = malonate(out) + sulfate(in). The enzyme catalyses oxaloacetate(in) + sulfate(out) = oxaloacetate(out) + sulfate(in). It catalyses the reaction thiosulfate(in) + sulfate(out) = thiosulfate(out) + sulfate(in). Inhibited by alpha-keto isocaproate, an intermediate of leucine biosynthesis pathway. In terms of biological role, antiporter that exchanges dicarboxylates and sulfur oxoanions across the inner membrane of mitochondria. Exports alpha-isopropylmalate from mitochondrial matrix to the cytosol, where it serves as a precursor for leucine biosynthesis. The sequence is that of Mitochondrial oxaloacetate transport protein (OAC1) from Saccharomyces cerevisiae (strain ATCC 204508 / S288c) (Baker's yeast).